The following is a 336-amino-acid chain: Dihydroorotate dehydrogenase (quinone) (336 aa).

FMN is bound by residues 62 to 66 (AGLDK) and Thr86. A substrate-binding site is contributed by Lys66. 111–115 (NRMGF) contacts substrate. 2 residues coordinate FMN: Asn139 and Asn172. Residue Asn172 participates in substrate binding. Ser175 acts as the Nucleophile in catalysis. Asn177 is a binding site for substrate. Residues Lys217 and Thr245 each contribute to the FMN site. 246–247 (NT) serves as a coordination point for substrate. FMN-binding positions include Gly268, Gly297, and 318-319 (YS).

It belongs to the dihydroorotate dehydrogenase family. Type 2 subfamily. Monomer. Requires FMN as cofactor.

The protein resides in the cell membrane. It catalyses the reaction (S)-dihydroorotate + a quinone = orotate + a quinol. The protein operates within pyrimidine metabolism; UMP biosynthesis via de novo pathway; orotate from (S)-dihydroorotate (quinone route): step 1/1. In terms of biological role, catalyzes the conversion of dihydroorotate to orotate with quinone as electron acceptor. This Salmonella typhi protein is Dihydroorotate dehydrogenase (quinone).